Reading from the N-terminus, the 317-residue chain is Probable deoxyhypusine synthase 1 (317 aa).

Lys-285 serves as the catalytic Nucleophile.

It belongs to the deoxyhypusine synthase family. The cofactor is NAD(+).

It catalyses the reaction [eIF5A protein]-L-lysine + spermidine = [eIF5A protein]-deoxyhypusine + propane-1,3-diamine. It functions in the pathway protein modification; eIF5A hypusination. In terms of biological role, catalyzes the NAD-dependent oxidative cleavage of spermidine and the subsequent transfer of the butylamine moiety of spermidine to the epsilon-amino group of a specific lysine residue of the eIF-5A precursor protein to form the intermediate deoxyhypusine residue. The polypeptide is Probable deoxyhypusine synthase 1 (dys1) (Methanosarcina acetivorans (strain ATCC 35395 / DSM 2834 / JCM 12185 / C2A)).